Consider the following 941-residue polypeptide: Zinc finger protein su(Hw) (941 aa).

2 disordered regions span residues 1–97 and 176–211; these read MSAS…APAA and ENNNGQEIVVTEDDEDLGEDGDEDGEDSSGKGNSSQ. The segment covering 47–57 has biased composition (low complexity); that stretch reads STTTTTSRTPS. Residues 185-202 are compositionally biased toward acidic residues; it reads VTEDDEDLGEDGDEDGED. Residue Thr186 is modified to Phosphothreonine. The C2H2-type 1; atypical zinc finger occupies 220–242; it reads HVCGKCYKTFRRVQSLKKHLEFC. Residues 290-313 form a C2H2-type 2 zinc finger; the sequence is INCPDCPKSFKTQTSYERHIFITH. Residues 319–341 form a C2H2-type 3; atypical zinc finger; sequence FPCSICNANLRSEALLALHEEQH. 9 C2H2-type zinc fingers span residues 348 to 366, 380 to 402, 413 to 435, 441 to 463, 469 to 491, 497 to 519, 523 to 545, 553 to 577, and 596 to 619; these read YACKICGKDFTRSYHLKRH, MSCKVCDRVFYRLDNLRSHLKQH, YMCHTCKNCFYSLSTLNIHIRTH, FDCDLCDKKFSALVALKKHRRYH, YSCTVCNQAFAVKEVLNRHMKRH, HKCDECGKSFIQATQLRTHSKTH, FPCEQCDEKFKTEKQLERHVKTH, FSCAECKRNFRTPALLKEHMDEGKH, and TDCAICDKNFDSSDTLRRHIRTVH. Residues 760-860 are interaction with mod(mdg4); that stretch reads ILTEEDIKLK…PIDDVIEYVL (101 aa). Positions 864-941 are disordered; the sequence is DQDEGGLDKD…KKPVGEQEKA (78 aa). 2 stretches are compositionally biased toward basic and acidic residues: residues 869–880 and 891–941; these read GLDKDNESHSGD and KTNE…QEKA.

As to quaternary structure, component of the gypsy chromatin insulator complex, composed of Cp190, mod(mdg4) and su(Hw). The gypsy chromatin insulator complex interacts with Topors via mod(mdg4) and su(Hw). Upon ecdysone stimulation, interacts with Nup98.

Its subcellular location is the nucleus. The protein localises to the chromosome. Functionally, component of the gypsy chromatin insulator complex which is required for the function of the gypsy chromatin insulator and other endogenous chromatin insulators. Chromatin insulators are regulatory elements which establish independent domains of transcriptional activity within eukaryotic genomes. Insulators have two defining properties; they can block the communication between an enhancer and a promoter when placed between them and can also buffer transgenes from position effect variegation (PEV). Insulators are proposed to structure the chromatin fiber into independent domains of differing transcriptional potential by promoting the formation of distinct chromatin loops. This chromatin looping may involve the formation of insulator bodies, where homotypic interactions between individual subunits of the insulator complex could promote the clustering of widely spaced insulators at the nuclear periphery. Within the gypsy insulator complex, this protein binds specifically to a region of the gypsy element located 3' of the 5' long terminal repeat (LTR), and may also mediate interaction with other endogenous insulators at sites distinct from those recognized by Cp190. Cooperates with pita and cliff to recruit Cp190 and regulate insulator function at the front-ultraabdominal (Fub) boundary. The sequence is that of Zinc finger protein su(Hw) from Drosophila melanogaster (Fruit fly).